The primary structure comprises 599 residues: Elongation factor 4 (599 aa).

In terms of domain architecture, tr-type G spans 2–184; the sequence is KNIRNFSIIA…RLVRDIPPPE (183 aa). GTP-binding positions include 14-19 and 131-134; these read DHGKST and NKID.

It belongs to the TRAFAC class translation factor GTPase superfamily. Classic translation factor GTPase family. LepA subfamily.

It localises to the cell inner membrane. The catalysed reaction is GTP + H2O = GDP + phosphate + H(+). Required for accurate and efficient protein synthesis under certain stress conditions. May act as a fidelity factor of the translation reaction, by catalyzing a one-codon backward translocation of tRNAs on improperly translocated ribosomes. Back-translocation proceeds from a post-translocation (POST) complex to a pre-translocation (PRE) complex, thus giving elongation factor G a second chance to translocate the tRNAs correctly. Binds to ribosomes in a GTP-dependent manner. The protein is Elongation factor 4 of Klebsiella pneumoniae subsp. pneumoniae (strain ATCC 700721 / MGH 78578).